We begin with the raw amino-acid sequence, 659 residues long: uncharacterized protein (659 aa).

The first 25 residues, 1 to 25, serve as a signal peptide directing secretion; it reads MVKRRLSAFGNAFLIYFIIFRLCCC. Over 26 to 556 the chain is Lumenal; sequence SPQTSHWCKY…LYQESSFQKR (531 aa). Residues N94, N111, N128, and N142 are each glycosylated (N-linked (GlcNAc...) asparagine). The 163-residue stretch at 173–335 folds into the SUN domain; that stretch reads AATIDSNIDE…SLLRVYGKTM (163 aa). N393 and N415 each carry an N-linked (GlcNAc...) asparagine glycan. Positions 417–445 are disordered; that stretch reads TGKSESYPATSTRSFNDISPSSSSSYSTA. The segment covering 423–434 has biased composition (polar residues); the sequence is YPATSTRSFNDI. 2 N-linked (GlcNAc...) asparagine glycosylation sites follow: N495 and N504. A helical membrane pass occupies residues 557–574; that stretch reads LLMLQLTVLIVLTVYMAV. Over 575–659 the chain is Cytoplasmic; that stretch reads SRLPENLPTT…IIHSRSHSVC (85 aa). 2 disordered regions span residues 580 to 603 and 632 to 659; these read NLPT…SRDE and KRDP…HSVC. The segment covering 581–592 has biased composition (polar residues); it reads LPTTRSSSNNPI. Residues 641-651 show a composition bias toward basic and acidic residues; it reads SIHEREQDKII.

The protein belongs to the SLP1 family. In terms of assembly, interacts with EMP65.

It is found in the endoplasmic reticulum membrane. May be involved in membrane protein folding. This is an uncharacterized protein from Schizosaccharomyces pombe (strain 972 / ATCC 24843) (Fission yeast).